Consider the following 808-residue polypeptide: DNA gyrase subunit B (808 aa).

Residues 429–544 enclose the Toprim domain; the sequence is SELFIVEGDS…KGYLYIAQPP (116 aa). Mg(2+) contacts are provided by Glu-435, Asp-509, and Asp-511.

This sequence belongs to the type II topoisomerase GyrB family. As to quaternary structure, heterotetramer, composed of two GyrA and two GyrB chains. In the heterotetramer, GyrA contains the active site tyrosine that forms a transient covalent intermediate with DNA, while GyrB binds cofactors and catalyzes ATP hydrolysis. Requires Mg(2+) as cofactor. The cofactor is Mn(2+). Ca(2+) is required as a cofactor.

The protein localises to the cytoplasm. The enzyme catalyses ATP-dependent breakage, passage and rejoining of double-stranded DNA.. Its function is as follows. A type II topoisomerase that negatively supercoils closed circular double-stranded (ds) DNA in an ATP-dependent manner to modulate DNA topology and maintain chromosomes in an underwound state. Negative supercoiling favors strand separation, and DNA replication, transcription, recombination and repair, all of which involve strand separation. Also able to catalyze the interconversion of other topological isomers of dsDNA rings, including catenanes and knotted rings. Type II topoisomerases break and join 2 DNA strands simultaneously in an ATP-dependent manner. The sequence is that of DNA gyrase subunit B from Rickettsia bellii (strain RML369-C).